Reading from the N-terminus, the 173-residue chain is Large ribosomal subunit protein uL10 (173 aa).

The protein belongs to the universal ribosomal protein uL10 family. As to quaternary structure, part of the ribosomal stalk of the 50S ribosomal subunit. The N-terminus interacts with L11 and the large rRNA to form the base of the stalk. The C-terminus forms an elongated spine to which L12 dimers bind in a sequential fashion forming a multimeric L10(L12)X complex.

Functionally, forms part of the ribosomal stalk, playing a central role in the interaction of the ribosome with GTP-bound translation factors. The protein is Large ribosomal subunit protein uL10 of Thiobacillus denitrificans (strain ATCC 25259 / T1).